Consider the following 555-residue polypeptide: Potassium-transporting ATPase potassium-binding subunit (555 aa).

Helical transmembrane passes span 2–22, 60–80, 130–150, 173–193, 246–266, 278–298, 374–394, 412–432, 483–503, and 525–545; these read IWVA…PTGI, QYAL…YFIF, IGIT…VMAF, VFLP…VPQT, MSNI…PFTY, ILFV…TTSE, AGFV…GLMV, LIAV…ALAL, LVMF…AASL, and GIFI…MLVL.

The protein belongs to the KdpA family. In terms of assembly, the system is composed of three essential subunits: KdpA, KdpB and KdpC.

It is found in the cell membrane. In terms of biological role, part of the high-affinity ATP-driven potassium transport (or Kdp) system, which catalyzes the hydrolysis of ATP coupled with the electrogenic transport of potassium into the cytoplasm. This subunit binds the extracellular potassium ions and delivers the ions to the membrane domain of KdpB through an intramembrane tunnel. This is Potassium-transporting ATPase potassium-binding subunit from Bacillus cereus (strain Q1).